The chain runs to 737 residues: Procollagen-lysine,2-oxoglutarate 5-dioxygenase 2 (737 aa).

The N-terminal stretch at 1-25 (MGDRGARPGRLMPMLALLSWAAGLG) is a signal peptide. Residues asparagine 63 and asparagine 209 are each glycosylated (N-linked (GlcNAc...) asparagine). Threonine 320 is subject to Phosphothreonine. The residue at position 323 (tyrosine 323) is a Phosphotyrosine. N-linked (GlcNAc...) asparagine glycosylation is found at asparagine 365 and asparagine 522. In terms of domain architecture, Fe2OG dioxygenase spans 644–737 (KGFALLNFVV…RYIAVSFIDP (94 aa)). Fe cation contacts are provided by histidine 666 and aspartate 668. N-linked (GlcNAc...) asparagine glycosylation is present at asparagine 696. N6-succinyllysine is present on lysine 704. Residue histidine 718 coordinates Fe cation. An N-linked (GlcNAc...) asparagine glycan is attached at asparagine 725. Arginine 728 is a catalytic residue.

As to quaternary structure, homodimer. Fe(2+) is required as a cofactor. L-ascorbate serves as cofactor. Is highly expressed in the heart, lung, kidney, eye, ovary and placenta.

It localises to the rough endoplasmic reticulum membrane. It carries out the reaction L-lysyl-[collagen] + 2-oxoglutarate + O2 = (5R)-5-hydroxy-L-lysyl-[collagen] + succinate + CO2. Forms hydroxylysine residues in -Xaa-Lys-Gly- sequences in collagens. These hydroxylysines serve as sites of attachment for carbohydrate units and are essential for the stability of the intermolecular collagen cross-links. The chain is Procollagen-lysine,2-oxoglutarate 5-dioxygenase 2 (Plod2) from Mus musculus (Mouse).